Here is a 505-residue protein sequence, read N- to C-terminus: Kelch-like protein 42 (505 aa).

The BTB domain occupies 5 to 78 (EMVQIRLEDR…INAGGAREGW (74 aa)). The residue at position 43 (Ser-43) is a Phosphoserine. 6 Kelch repeats span residues 176–234 (PGDV…PLAN), 235–282 (NLPP…NEWL), 284–325 (VASM…DAWN), 327–372 (VAPL…DMWT), 374–429 (FETC…RQWL), and 431–480 (LKEN…DSWE).

Component of the BCR(KLHL42) E3 ubiquitin ligase complex, at least composed of CUL3 and KLHL42. Interacts (via the BTB domain) with CUL3. Interacts (via the kelch domains) with KATNA1.

It is found in the cytoplasm. The protein localises to the cytoskeleton. It localises to the spindle. It functions in the pathway protein modification; protein ubiquitination. In terms of biological role, substrate-specific adapter of a BCR (BTB-CUL3-RBX1) E3 ubiquitin-protein ligase complex required for mitotic progression and cytokinesis. The BCR(KLHL42) E3 ubiquitin ligase complex mediates the ubiquitination and subsequent degradation of KATNA1. Involved in microtubule dynamics throughout mitosis. This chain is Kelch-like protein 42 (KLHL42), found in Homo sapiens (Human).